The chain runs to 64 residues: Large ribosomal subunit protein bL28 (64 aa).

Residues 1 to 26 (MARRDQLTGKGPLSGNTRSHAMNHSK) form a disordered region.

The protein belongs to the bacterial ribosomal protein bL28 family.

This is Large ribosomal subunit protein bL28 from Ureaplasma urealyticum serovar 10 (strain ATCC 33699 / Western).